A 308-amino-acid polypeptide reads, in one-letter code: MEKHIPVLLKESIEYLNIKENGIYVDCTLGRAGHSSEILKKLKDGKLFSIDQDETAILEGTEKLTKISNNFKILEGNFVNISAMLAMQGIFEVDGILYDLGVSSPQFDVAERGFSYRFDGPLDMRMDRANNSLTAHKIVNEYTQEELEQILWNYGDEKFARSIAKNIILSRPINTTFELVSVIKKSLPAKILKQQKHPAKKTFQALRIRVNNEMETLESSLEQSLNLLKPKGRVVVITFHSLEEKVVKNIFKKYTLDEQQFYLSNLPYEIESSKDFKLLFKKPLKPTNTEVENNNRSHSAKLWVIEKK.

S-adenosyl-L-methionine is bound by residues 32–34 (AGH), Asp51, Phe78, Asp99, and Gln106.

Belongs to the methyltransferase superfamily. RsmH family.

Its subcellular location is the cytoplasm. It carries out the reaction cytidine(1402) in 16S rRNA + S-adenosyl-L-methionine = N(4)-methylcytidine(1402) in 16S rRNA + S-adenosyl-L-homocysteine + H(+). In terms of biological role, specifically methylates the N4 position of cytidine in position 1402 (C1402) of 16S rRNA. The sequence is that of Ribosomal RNA small subunit methyltransferase H from Mesoplasma florum (strain ATCC 33453 / NBRC 100688 / NCTC 11704 / L1) (Acholeplasma florum).